The primary structure comprises 237 residues: 7-cyano-7-deazaguanine synthase (237 aa).

Y9–L19 is a binding site for ATP. C189, C199, C202, and C205 together coordinate Zn(2+).

The protein belongs to the QueC family. It depends on Zn(2+) as a cofactor.

The enzyme catalyses 7-carboxy-7-deazaguanine + NH4(+) + ATP = 7-cyano-7-deazaguanine + ADP + phosphate + H2O + H(+). It participates in purine metabolism; 7-cyano-7-deazaguanine biosynthesis. Catalyzes the ATP-dependent conversion of 7-carboxy-7-deazaguanine (CDG) to 7-cyano-7-deazaguanine (preQ(0)). The protein is 7-cyano-7-deazaguanine synthase of Geobacter metallireducens (strain ATCC 53774 / DSM 7210 / GS-15).